A 360-amino-acid chain; its full sequence is MRVFNFSAGPAAMPEEVLRQAADEMLDWQGSGMSVMEMSHRGKEFMSIHEEALVDLRDLLEVPASHRILFLQGGGLGENAIVPMNLMGAKPRADFVVTGSWSQKSFKEAQKYGTVHLAASGQTAEGFTRAPARSEWQLSDDPAYVHLCTNETIHGVETFEIPDLGDIPLVADASSHILSRPMDIAKYGVLFGGAQKNIGMAGVTVVIVREDMLDRAQSICPSAFEWKTVAENNSMYNTPPTYAIYIAGLVFKWLKKQGGLAAMEARNVEKSKLLYDAVDTSSFYLNKVERGSRSRMNVPFFLADESRNEDFLAGAKARGMVQLKGHKSVGGMRASIYNAVPLEGVKALVEYMKEFEQRSA.

An L-glutamate-binding site is contributed by R41. Residues W101, T152, D172, and Q195 each contribute to the pyridoxal 5'-phosphate site. K196 is modified (N6-(pyridoxal phosphate)lysine). Residue 237–238 (NT) coordinates pyridoxal 5'-phosphate.

It belongs to the class-V pyridoxal-phosphate-dependent aminotransferase family. SerC subfamily. In terms of assembly, homodimer. Pyridoxal 5'-phosphate serves as cofactor.

Its subcellular location is the cytoplasm. The catalysed reaction is O-phospho-L-serine + 2-oxoglutarate = 3-phosphooxypyruvate + L-glutamate. It carries out the reaction 4-(phosphooxy)-L-threonine + 2-oxoglutarate = (R)-3-hydroxy-2-oxo-4-phosphooxybutanoate + L-glutamate. The protein operates within amino-acid biosynthesis; L-serine biosynthesis; L-serine from 3-phospho-D-glycerate: step 2/3. Its pathway is cofactor biosynthesis; pyridoxine 5'-phosphate biosynthesis; pyridoxine 5'-phosphate from D-erythrose 4-phosphate: step 3/5. Its function is as follows. Catalyzes the reversible conversion of 3-phosphohydroxypyruvate to phosphoserine and of 3-hydroxy-2-oxo-4-phosphonooxybutanoate to phosphohydroxythreonine. The sequence is that of Phosphoserine aminotransferase from Paraburkholderia phytofirmans (strain DSM 17436 / LMG 22146 / PsJN) (Burkholderia phytofirmans).